Here is a 168-residue protein sequence, read N- to C-terminus: S-ribosylhomocysteine lyase (168 aa).

Fe cation is bound by residues H54, H58, and C128.

It belongs to the LuxS family. As to quaternary structure, homodimer. Fe cation is required as a cofactor.

The catalysed reaction is S-(5-deoxy-D-ribos-5-yl)-L-homocysteine = (S)-4,5-dihydroxypentane-2,3-dione + L-homocysteine. Functionally, involved in the synthesis of autoinducer 2 (AI-2) which is secreted by bacteria and is used to communicate both the cell density and the metabolic potential of the environment. The regulation of gene expression in response to changes in cell density is called quorum sensing. Catalyzes the transformation of S-ribosylhomocysteine (RHC) to homocysteine (HC) and 4,5-dihydroxy-2,3-pentadione (DPD). The protein is S-ribosylhomocysteine lyase of Histophilus somni (strain 2336) (Haemophilus somnus).